Consider the following 1909-residue polypeptide: NFX1-type zinc finger-containing protein 1 (1909 aa).

Composition is skewed to basic and acidic residues over residues 1 to 12 and 76 to 107; these read MEDRRPHLEARP and RNQE…EGRS. Disordered regions lie at residues 1-133 and 787-813; these read MEDR…QPQQ and TQSA…EEEG. The span at 113–122 shows a compositional bias: polar residues; sequence SSDTFQQWHT. A compositionally biased stretch (acidic residues) spans 802 to 813; it reads EGEEEEEGEEEG. Residues 939–964 are a coiled coil; the sequence is RRRILSYERQYRTWAERMAELRLQED. 4 NF-X1-type zinc fingers span residues 1291–1313, 1375–1393, 1433–1455, and 1463–1480; these read CGHV…QCMK, CGHR…LCSE, CGHP…RCQQ, and CSHK…PCQR. Residues 1733-1764 are a coiled coil; that stretch reads LAKKRLSFSSQELSDLQSEIQRLTYLVNLLMR. The segment at 1818–1889 adopts an RZ-type zinc-finger fold; it reads ISDEERVQIV…LASEMDGAQH (72 aa). The Zn(2+) site is built by C1840, H1844, C1860, and C1863.

Belongs to the ZNFX1 family. Interacts with MAVS.

It is found in the mitochondrion outer membrane. The protein localises to the cytoplasm. Its subcellular location is the stress granule. Its function is as follows. RNA-binding protein that initiates the antiviral response and is required to restrict the replication of RNA viruses. Acts as a double-stranded RNA (dsRNA) sensor that recognizes viral RNA and then interacts with MAVS to initiate the type I interferon response. Also required for immunity against some bacteria, such as mycobacteria. In Mus musculus (Mouse), this protein is NFX1-type zinc finger-containing protein 1.